Reading from the N-terminus, the 874-residue chain is MAKTNSYKKVIAGTMTAAMVAGVVSPVAAAGKSFPDVPAGHWAEDSINYLVDKGAIVGKPDGTYGPTESIDRASAAVIFTKILNLPVDENAQPSFKDAKNLWSSKYIAAVEKAGVVKGDGKDNFYPEGKIDRASFASMLVGAYNLKEKVDGTLVTKFDDLRGHWGEEKANILVNLGISVGTGGKWEPNKSVSRAEAAQFIALTDKKYAKPENSDAKVTNVAATEPTQLTLTGTGLNKLTAEDVTLEGNKAIALEASKDGKSAVVTLSGKIAPNKELPVKVKGNTFIVKYVYEVKKLRVEQLTFDDDRADQAVVFKLNDEKGNADIEYLDIAGHDVKFVANNLDGTPANIFEGGTAESTTGKLAVGIAEGKYKVEVQVTKRGGITVSNTGIIEVKNLDAEATAIKDVVFAVDTDKAGVNYAKPLSGTDFTLNSKTLVAGEKAGIHKVVAQINKENKVVDPSAISLKSSNPGVISVKNGEIKAEAAGSATLTVKVGDVTKTFDFVVKTDTRKLTTVKANPDQLKVVDGKELPVTFVTTDQYGDPFGANSGAIKEVFPQTGVVKVLDVTTTNEGSIGTSSIKVKGENVGAGTIHFQNPNASGEGYGSLHVEVTKSNIGHEAPRLELVSKAGQKGEAADTTLGAGNTVAYQLSNYTTEGVYADAADLAGYEFRVGNDKIASAKIEGKTLKVTGKTAGVTDVILTKDGATAGHATITVTQENIQITSVKFKDVEVEQFENRKVNIDRVLDVVKSDKDDVLNGIKLNISTEHKVRIVDEGTEQGKVYLDRNDNATFDGNDVALGYVTAVKSNDTVSKEGNDLFKFLTDETATNKNDVFKGVTTAFGDKGTVIFKVMKDRVAPTTEYGTKAVTINVIKEEI.

An N-terminal signal peptide occupies residues 1 to 30; it reads MAKTNSYKKVIAGTMTAAMVAGVVSPVAAA. SLH domains lie at 31-93, 94-151, and 152-214; these read GKSF…NAQP, SFKD…KVDG, and TLVT…ENSD.

Its subcellular location is the secreted. The protein resides in the cell wall. It is found in the S-layer. The S-layer is a paracrystalline mono-layered assembly of proteins which coat the surface of bacteria. This Bacillus licheniformis protein is S-layer protein.